The sequence spans 490 residues: ATP synthase subunit beta, chloroplastic (490 aa).

T6 bears the Phosphothreonine mark. S13 carries the post-translational modification Phosphoserine. 172–179 lines the ATP pocket; that stretch reads GGAGVGKT.

It belongs to the ATPase alpha/beta chains family. F-type ATPases have 2 components, CF(1) - the catalytic core - and CF(0) - the membrane proton channel. CF(1) has five subunits: alpha(3), beta(3), gamma(1), delta(1), epsilon(1). CF(0) has four main subunits: a(1), b(1), b'(1) and c(9-12).

It is found in the plastid. It localises to the chloroplast thylakoid membrane. The catalysed reaction is ATP + H2O + 4 H(+)(in) = ADP + phosphate + 5 H(+)(out). In terms of biological role, produces ATP from ADP in the presence of a proton gradient across the membrane. The catalytic sites are hosted primarily by the beta subunits. This chain is ATP synthase subunit beta, chloroplastic, found in Aethionema grandiflorum (Persian stone-cress).